The chain runs to 74 residues: CLAVATA3/ESR (CLE)-related protein 1 (74 aa).

The signal sequence occupies residues 1–22 (MANLKFLLCLFLICVSLSRSSA). N-linked (GlcNAc...) asparagine glycosylation occurs at asparagine 59. Proline 66 and proline 69 each carry hydroxyproline. Proline 69 carries an O-linked (Ara...) hydroxyproline glycan.

This sequence belongs to the CLV3/ESR signal peptide family. The O-glycosylation (arabinosylation) of the hydroxyproline Pro-69 enhances binding affinity of the CLE1p peptide for its receptor. Mostly expressed in roots and seedlings, and, to a lower extent, in stems and apex.

Its subcellular location is the secreted. The protein resides in the extracellular space. Functionally, extracellular signal peptide that regulates cell fate. The chain is CLAVATA3/ESR (CLE)-related protein 1 from Arabidopsis thaliana (Mouse-ear cress).